A 244-amino-acid chain; its full sequence is Tetraspanin-7 (244 aa).

Residues 1–11 are Cytoplasmic-facing; that stretch reads METKPVITCLK. Residues 12–35 traverse the membrane as a helical segment; sequence TLLIIYSFVFWITGVILLAVGVWG. Over 36-51 the chain is Extracellular; that stretch reads KLTLGTYISLIAENST. A glycan (N-linked (GlcNAc...) asparagine) is linked at Asn49. The chain crosses the membrane as a helical span at residues 52-70; that stretch reads NAPYVLIGTGTTIVVFGLF. Over 71–81 the chain is Cytoplasmic; sequence GCFATCRGSPW. The helical transmembrane segment at 82-107 threads the bilayer; the sequence is MLKLYAMFLSLVFLAELVAGISGFVF. Topologically, residues 108-208 are extracellular; that stretch reads RHEIKDTFLR…LVTSFMETNM (101 aa). Asn150, Asn153, Asn172, and Asn183 each carry an N-linked (GlcNAc...) asparagine glycan. A helical membrane pass occupies residues 209–229; that stretch reads GIIAGVAFGIAFSQLIGMLLA. Topologically, residues 230-244 are cytoplasmic; sequence CCLSRFITANQYEMV.

The protein belongs to the tetraspanin (TM4SF) family.

The protein resides in the membrane. In terms of biological role, may be involved in cell proliferation and cell motility. The chain is Tetraspanin-7 (TSPAN7) from Pongo pygmaeus (Bornean orangutan).